Consider the following 444-residue polypeptide: Methylenetetrahydrofolate--tRNA-(uracil-5-)-methyltransferase TrmFO (444 aa).

9 to 14 provides a ligand contact to FAD; the sequence is GAGMAG.

This sequence belongs to the MnmG family. TrmFO subfamily. FAD is required as a cofactor.

The protein localises to the cytoplasm. It carries out the reaction uridine(54) in tRNA + (6R)-5,10-methylene-5,6,7,8-tetrahydrofolate + NADH + H(+) = 5-methyluridine(54) in tRNA + (6S)-5,6,7,8-tetrahydrofolate + NAD(+). The catalysed reaction is uridine(54) in tRNA + (6R)-5,10-methylene-5,6,7,8-tetrahydrofolate + NADPH + H(+) = 5-methyluridine(54) in tRNA + (6S)-5,6,7,8-tetrahydrofolate + NADP(+). Its function is as follows. Catalyzes the folate-dependent formation of 5-methyl-uridine at position 54 (M-5-U54) in all tRNAs. The polypeptide is Methylenetetrahydrofolate--tRNA-(uracil-5-)-methyltransferase TrmFO (Cereibacter sphaeroides (strain ATCC 17029 / ATH 2.4.9) (Rhodobacter sphaeroides)).